A 222-amino-acid chain; its full sequence is Glutathione S-transferase A4 (222 aa).

N-acetylmethionine is present on methionine 1. A GST N-terminal domain is found at 3-83 (ARPKLHYPNG…YIADKHNLFG (81 aa)). Glutathione contacts are provided by residues tyrosine 9, 54–55 (QV), and 67–68 (QT). One can recognise a GST C-terminal domain in the interval 85 to 208 (NLKERTLIDM…EPGSKKKPPP (124 aa)). Tyrosine 212 contributes to the substrate binding site.

The protein belongs to the GST superfamily. Alpha family. In terms of assembly, homodimer. Expressed at a high level in brain, placenta, and skeletal muscle and much lower in lung and liver.

Its subcellular location is the cytoplasm. It carries out the reaction RX + glutathione = an S-substituted glutathione + a halide anion + H(+). Functionally, conjugation of reduced glutathione to a wide number of exogenous and endogenous hydrophobic electrophiles. This isozyme has a high catalytic efficiency with 4-hydroxyalkenals such as 4-hydroxynonenal (4-HNE). The polypeptide is Glutathione S-transferase A4 (GSTA4) (Homo sapiens (Human)).